The sequence spans 172 residues: 3-hydroxydecanoyl-[acyl-carrier-protein] dehydratase (172 aa).

Residue His71 is part of the active site.

It belongs to the thioester dehydratase family. FabA subfamily. As to quaternary structure, homodimer.

It localises to the cytoplasm. The enzyme catalyses a (3R)-hydroxyacyl-[ACP] = a (2E)-enoyl-[ACP] + H2O. The catalysed reaction is (3R)-hydroxydecanoyl-[ACP] = (2E)-decenoyl-[ACP] + H2O. It carries out the reaction (2E)-decenoyl-[ACP] = (3Z)-decenoyl-[ACP]. It participates in lipid metabolism; fatty acid biosynthesis. In terms of biological role, necessary for the introduction of cis unsaturation into fatty acids. Catalyzes the dehydration of (3R)-3-hydroxydecanoyl-ACP to E-(2)-decenoyl-ACP and then its isomerization to Z-(3)-decenoyl-ACP. Can catalyze the dehydratase reaction for beta-hydroxyacyl-ACPs with saturated chain lengths up to 16:0, being most active on intermediate chain length. This chain is 3-hydroxydecanoyl-[acyl-carrier-protein] dehydratase, found in Escherichia coli O127:H6 (strain E2348/69 / EPEC).